Here is a 170-residue protein sequence, read N- to C-terminus: Small ribosomal subunit protein uS5 (170 aa).

The region spanning 13 to 76 (LLEKLVGVRR…ENARKNMISV (64 aa)) is the S5 DRBM domain.

It belongs to the universal ribosomal protein uS5 family. As to quaternary structure, part of the 30S ribosomal subunit. Contacts proteins S4 and S8.

Its function is as follows. With S4 and S12 plays an important role in translational accuracy. In terms of biological role, located at the back of the 30S subunit body where it stabilizes the conformation of the head with respect to the body. In Nitrosococcus oceani (strain ATCC 19707 / BCRC 17464 / JCM 30415 / NCIMB 11848 / C-107), this protein is Small ribosomal subunit protein uS5.